A 160-amino-acid polypeptide reads, in one-letter code: MSRRRRVSRRPVVSDGGPGGVLLARFINVVMSRGKKALAERIVSGALKMAESKSTGETGVSIFNTAVSNVMPRMEVRSRRVGGVTYQIPVEVREDRSTSLALRWIVKAARTNRKRTNKTYMSCLCNELLEAYNKRGSACKMKEEKFRMAEANKAFSHFRF.

This sequence belongs to the universal ribosomal protein uS7 family. Part of the 30S ribosomal subunit. Contacts proteins S9 and S11.

Its function is as follows. One of the primary rRNA binding proteins, it binds directly to 16S rRNA where it nucleates assembly of the head domain of the 30S subunit. Is located at the subunit interface close to the decoding center, probably blocks exit of the E-site tRNA. This Anaplasma marginale (strain Florida) protein is Small ribosomal subunit protein uS7.